Here is a 224-residue protein sequence, read N- to C-terminus: UPF0319 protein VC_1853 (224 aa).

Positions 1-21 (MKLNPLILGLLLSFSAGHSLA) are cleaved as a signal peptide.

It belongs to the UPF0319 family.

In Vibrio cholerae serotype O1 (strain ATCC 39315 / El Tor Inaba N16961), this protein is UPF0319 protein VC_1853.